The following is a 141-amino-acid chain: Nucleoside diphosphate kinase (141 aa).

The ATP site is built by Lys-11, Phe-59, Arg-87, Thr-93, Arg-104, and Asn-114. His-117 (pros-phosphohistidine intermediate) is an active-site residue.

It belongs to the NDK family. Homotetramer. It depends on Mg(2+) as a cofactor.

It is found in the cytoplasm. It carries out the reaction a 2'-deoxyribonucleoside 5'-diphosphate + ATP = a 2'-deoxyribonucleoside 5'-triphosphate + ADP. It catalyses the reaction a ribonucleoside 5'-diphosphate + ATP = a ribonucleoside 5'-triphosphate + ADP. Major role in the synthesis of nucleoside triphosphates other than ATP. The ATP gamma phosphate is transferred to the NDP beta phosphate via a ping-pong mechanism, using a phosphorylated active-site intermediate. This chain is Nucleoside diphosphate kinase, found in Cupriavidus pinatubonensis (strain JMP 134 / LMG 1197) (Cupriavidus necator (strain JMP 134)).